The primary structure comprises 182 residues: Adenine phosphoribosyltransferase (182 aa).

This sequence belongs to the purine/pyrimidine phosphoribosyltransferase family. In terms of assembly, homodimer.

Its subcellular location is the cytoplasm. The catalysed reaction is AMP + diphosphate = 5-phospho-alpha-D-ribose 1-diphosphate + adenine. Its pathway is purine metabolism; AMP biosynthesis via salvage pathway; AMP from adenine: step 1/1. In terms of biological role, catalyzes a salvage reaction resulting in the formation of AMP, that is energically less costly than de novo synthesis. This Campylobacter jejuni subsp. jejuni serotype O:2 (strain ATCC 700819 / NCTC 11168) protein is Adenine phosphoribosyltransferase.